A 907-amino-acid chain; its full sequence is Isoleucine--tRNA ligase (907 aa).

The 'HIGH' region motif lies at 57 to 67 (PFANGKAHMGS). Glu-549 contributes to the L-isoleucyl-5'-AMP binding site. The 'KMSKS' region motif lies at 590-594 (KLSKS). Lys-593 serves as a coordination point for ATP. Positions 867, 870, 889, and 892 each coordinate Zn(2+).

It belongs to the class-I aminoacyl-tRNA synthetase family. IleS type 1 subfamily. In terms of assembly, monomer. Zn(2+) serves as cofactor.

Its subcellular location is the cytoplasm. The enzyme catalyses tRNA(Ile) + L-isoleucine + ATP = L-isoleucyl-tRNA(Ile) + AMP + diphosphate. Catalyzes the attachment of isoleucine to tRNA(Ile). As IleRS can inadvertently accommodate and process structurally similar amino acids such as valine, to avoid such errors it has two additional distinct tRNA(Ile)-dependent editing activities. One activity is designated as 'pretransfer' editing and involves the hydrolysis of activated Val-AMP. The other activity is designated 'posttransfer' editing and involves deacylation of mischarged Val-tRNA(Ile). The sequence is that of Isoleucine--tRNA ligase from Methylacidiphilum infernorum (isolate V4) (Methylokorus infernorum (strain V4)).